Here is a 783-residue protein sequence, read N- to C-terminus: LPS-assembly protein LptD (783 aa).

Positions 1–24 (MSCFSRTFLAASISAALFAPQIQA) are cleaved as a signal peptide.

Belongs to the LptD family. Component of the lipopolysaccharide transport and assembly complex. Interacts with LptE and LptA.

It localises to the cell outer membrane. Together with LptE, is involved in the assembly of lipopolysaccharide (LPS) at the surface of the outer membrane. The sequence is that of LPS-assembly protein LptD from Vibrio cholerae serotype O1 (strain ATCC 39315 / El Tor Inaba N16961).